The following is a 426-amino-acid chain: Glutamate-1-semialdehyde 2,1-aminomutase (426 aa).

Residue lysine 265 is modified to N6-(pyridoxal phosphate)lysine.

It belongs to the class-III pyridoxal-phosphate-dependent aminotransferase family. HemL subfamily. Homodimer. Requires pyridoxal 5'-phosphate as cofactor.

The protein localises to the cytoplasm. It catalyses the reaction (S)-4-amino-5-oxopentanoate = 5-aminolevulinate. Its pathway is porphyrin-containing compound metabolism; protoporphyrin-IX biosynthesis; 5-aminolevulinate from L-glutamyl-tRNA(Glu): step 2/2. This chain is Glutamate-1-semialdehyde 2,1-aminomutase, found in Marinobacter nauticus (strain ATCC 700491 / DSM 11845 / VT8) (Marinobacter aquaeolei).